Consider the following 287-residue polypeptide: Elongation factor Ts (287 aa).

The involved in Mg(2+) ion dislocation from EF-Tu stretch occupies residues 81–84 (TDFV).

The protein belongs to the EF-Ts family.

It localises to the cytoplasm. Its function is as follows. Associates with the EF-Tu.GDP complex and induces the exchange of GDP to GTP. It remains bound to the aminoacyl-tRNA.EF-Tu.GTP complex up to the GTP hydrolysis stage on the ribosome. This chain is Elongation factor Ts, found in Nitratidesulfovibrio vulgaris (strain ATCC 29579 / DSM 644 / CCUG 34227 / NCIMB 8303 / VKM B-1760 / Hildenborough) (Desulfovibrio vulgaris).